The sequence spans 197 residues: GTP cyclohydrolase-2 (197 aa).

50–54 contributes to the GTP binding site; that stretch reads RIHSE. 3 residues coordinate Zn(2+): Cys55, Cys66, and Cys68. GTP-binding positions include Gln71, 93–95, and Thr115; that span reads EGR. Asp127 acts as the Proton acceptor in catalysis. Residue Arg129 is the Nucleophile of the active site. GTP-binding residues include Thr150 and Lys155.

This sequence belongs to the GTP cyclohydrolase II family. The cofactor is Zn(2+).

The enzyme catalyses GTP + 4 H2O = 2,5-diamino-6-hydroxy-4-(5-phosphoribosylamino)-pyrimidine + formate + 2 phosphate + 3 H(+). It participates in cofactor biosynthesis; riboflavin biosynthesis; 5-amino-6-(D-ribitylamino)uracil from GTP: step 1/4. In terms of biological role, catalyzes the conversion of GTP to 2,5-diamino-6-ribosylamino-4(3H)-pyrimidinone 5'-phosphate (DARP), formate and pyrophosphate. The protein is GTP cyclohydrolase-2 of Neisseria meningitidis serogroup C (strain 053442).